A 35-amino-acid polypeptide reads, in one-letter code: Cupiennin-2a (35 aa).

Lysine 35 carries the lysine amide modification.

In terms of tissue distribution, expressed by the venom gland.

It is found in the secreted. The protein is Cupiennin-2a of Cupiennius salei (American wandering spider).